A 597-amino-acid chain; its full sequence is Elongation factor 4 (597 aa).

One can recognise a tr-type G domain in the interval 2–184 (KNIRNFSIIA…TMIAKIPPPV (183 aa)). GTP contacts are provided by residues 14–19 (DHGKST) and 131–134 (NKID).

The protein belongs to the TRAFAC class translation factor GTPase superfamily. Classic translation factor GTPase family. LepA subfamily.

The protein localises to the cell inner membrane. It carries out the reaction GTP + H2O = GDP + phosphate + H(+). Functionally, required for accurate and efficient protein synthesis under certain stress conditions. May act as a fidelity factor of the translation reaction, by catalyzing a one-codon backward translocation of tRNAs on improperly translocated ribosomes. Back-translocation proceeds from a post-translocation (POST) complex to a pre-translocation (PRE) complex, thus giving elongation factor G a second chance to translocate the tRNAs correctly. Binds to ribosomes in a GTP-dependent manner. In Methylobacillus flagellatus (strain ATCC 51484 / DSM 6875 / VKM B-1610 / KT), this protein is Elongation factor 4.